The chain runs to 275 residues: Phenylalanine-4-hydroxylase (275 aa).

Positions 135, 140, and 181 each coordinate Fe cation.

The protein belongs to the biopterin-dependent aromatic amino acid hydroxylase family. Fe(2+) is required as a cofactor.

It carries out the reaction (6R)-L-erythro-5,6,7,8-tetrahydrobiopterin + L-phenylalanine + O2 = (4aS,6R)-4a-hydroxy-L-erythro-5,6,7,8-tetrahydrobiopterin + L-tyrosine. The protein operates within amino-acid degradation; L-phenylalanine degradation; acetoacetate and fumarate from L-phenylalanine: step 1/6. This Mesorhizobium japonicum (strain LMG 29417 / CECT 9101 / MAFF 303099) (Mesorhizobium loti (strain MAFF 303099)) protein is Phenylalanine-4-hydroxylase (phhA).